Consider the following 657-residue polypeptide: UvrABC system protein B (657 aa).

The Helicase ATP-binding domain occupies 25 to 182; sequence NSIKSNNRAQ…KKLIEIQYER (158 aa). 38–45 contributes to the ATP binding site; it reads GVTGSGKT. The Beta-hairpin motif lies at 91–114; the sequence is YYDYYQPEAYVPQTDTFIEKDASI. Positions 429 to 595 constitute a Helicase C-terminal domain; sequence QIDDLYGEIN…TIIKDVRDII (167 aa). In terms of domain architecture, UVR spans 621–656; that stretch reads DKLIKDLTEEMLLAAKNLQFERAAELRDIINEIKDG.

This sequence belongs to the UvrB family. As to quaternary structure, forms a heterotetramer with UvrA during the search for lesions. Interacts with UvrC in an incision complex.

It localises to the cytoplasm. The UvrABC repair system catalyzes the recognition and processing of DNA lesions. A damage recognition complex composed of 2 UvrA and 2 UvrB subunits scans DNA for abnormalities. Upon binding of the UvrA(2)B(2) complex to a putative damaged site, the DNA wraps around one UvrB monomer. DNA wrap is dependent on ATP binding by UvrB and probably causes local melting of the DNA helix, facilitating insertion of UvrB beta-hairpin between the DNA strands. Then UvrB probes one DNA strand for the presence of a lesion. If a lesion is found the UvrA subunits dissociate and the UvrB-DNA preincision complex is formed. This complex is subsequently bound by UvrC and the second UvrB is released. If no lesion is found, the DNA wraps around the other UvrB subunit that will check the other stand for damage. In Clostridium beijerinckii (strain ATCC 51743 / NCIMB 8052) (Clostridium acetobutylicum), this protein is UvrABC system protein B.